Consider the following 710-residue polypeptide: RNA-directed RNA polymerase catalytic subunit (710 aa).

Residues 285-460 (ASKQTFHTAV…GINMSPSKCI (176 aa)) form the RdRp catalytic domain.

Belongs to the influenza viruses polymerase PB1 family. RNA polymerase is composed of three subunits: PA, PB1 and PB2.

It carries out the reaction RNA(n) + a ribonucleoside 5'-triphosphate = RNA(n+1) + diphosphate. In terms of biological role, RNA-dependent RNA polymerase which is responsible for replication and transcription of virus RNA segments. The transcription of viral mRNAs occurs by a unique mechanism called cap-snatching. 5' methylated caps of cellular mRNAs are cleaved after 10-13 nucleotides by PA. In turn, these short capped RNAs are used as primers by PB1 for transcription of viral mRNAs. During virus replication, PB1 initiates RNA synthesis and copy vRNA into complementary RNA (cRNA) which in turn serves as a template for the production of more vRNAs. In Amblyomma variegatum (Tropical bont tick), this protein is RNA-directed RNA polymerase catalytic subunit.